Here is a 144-residue protein sequence, read N- to C-terminus: Austinoid biosynthesis clusters protein S (144 aa).

This sequence belongs to the trt14 isomerase family. As to quaternary structure, homodimer.

The protein operates within secondary metabolite biosynthesis; terpenoid biosynthesis. Part of the gene cluster B that mediates the biosynthesis of the fungal meroterpenoid acetoxydehydroaustin. The first step of the pathway is the synthesis of 3,5-dimethylorsellinic acid by the polyketide synthase ausA. 3,5-dimethylorsellinic acid is then prenylated by the polyprenyl transferase ausN. Further epoxidation by the FAD-dependent monooxygenase ausM and cyclization by the probable terpene cyclase ausL lead to the formation of protoaustinoid A. Protoaustinoid A is then oxidized to spiro-lactone preaustinoid A3 by the combined action of the FAD-binding monooxygenases ausB and ausC, and the dioxygenase ausE. Acid-catalyzed keto-rearrangement and ring contraction of the tetraketide portion of preaustinoid A3 by ausJ lead to the formation of preaustinoid A4. The aldo-keto reductase ausK, with the help of ausH, is involved in the next step by transforming preaustinoid A4 into isoaustinone which is in turn hydroxylated by the P450 monooxygenase ausI to form austinolide. The cytochrome P450 monooxygenase ausG then modifies austinolide to austinol. Austinol is further acetylated to austin by the O-acetyltransferase ausP, which spontaneously changes to dehydroaustin. The cytochrome P450 monooxygenase then converts dehydroaustin is into 7-dehydrodehydroaustin. The hydroxylation catalyzed by ausR permits the second O-acetyltransferase ausQ to add an additional acetyl group to the molecule, leading to the formation of acetoxydehydroaustin. Due to genetic rearrangements of the clusters and the subsequent loss of some enzymes, the end product of the Penicillium brasilianum austinoid biosynthesis clusters is acetoxydehydroaustin. AusS is necessary for austinoids production and may play a possible function as a regulator. The protein is Austinoid biosynthesis clusters protein S of Penicillium brasilianum.